Here is a 241-residue protein sequence, read N- to C-terminus: Tubulin-like protein alpha-4B (241 aa).

Residues 1–10 (MRHQQTERQD) are compositionally biased toward basic and acidic residues. Residues 1-20 (MRHQQTERQDPSQPLSRQHG) are disordered. A GTP-binding site is contributed by D10. D10 contributes to the Mg(2+) binding site. The span at 11–20 (PSQPLSRQHG) shows a compositional bias: polar residues. GTP is bound by residues S79, G83, T84, T118, N145, and N167. E193 is a catalytic residue.

It belongs to the tubulin family. Requires Mg(2+) as cofactor. Post-translationally, some glutamate residues at the C-terminus are polyglutamylated, resulting in polyglutamate chains on the gamma-carboxyl group. Polyglutamylation plays a key role in microtubule severing by spastin (SPAST). SPAST preferentially recognizes and acts on microtubules decorated with short polyglutamate tails: severing activity by SPAST increases as the number of glutamates per tubulin rises from one to eight, but decreases beyond this glutamylation threshold. Glutamylation is also involved in cilia motility. Some glutamate residues at the C-terminus are monoglycylated but not polyglycylated due to the absence of functional TTLL10 in human. Monoglycylation is mainly limited to tubulin incorporated into cilia and flagella axonemes, which is required for their stability and maintenance. Flagella glycylation controls sperm motility. Both polyglutamylation and monoglycylation can coexist on the same protein on adjacent residues, and lowering glycylation levels increases polyglutamylation, and reciprocally.

Its subcellular location is the cytoplasm. The protein localises to the cytoskeleton. The enzyme catalyses GTP + H2O = GDP + phosphate + H(+). Functionally, tubulin is the major constituent of microtubules, a cylinder consisting of laterally associated linear protofilaments composed ofalpha- and beta-tubulin heterodimers. The polypeptide is Tubulin-like protein alpha-4B (TUBA4B) (Homo sapiens (Human)).